The following is a 67-amino-acid chain: MKAKELRELTDAELNKKLSDSKEELFKLRFQLATGQLDNPMKLQEVRRRIARVKTIIRERELGIRRA.

It belongs to the universal ribosomal protein uL29 family.

The protein is Large ribosomal subunit protein uL29 of Pelotomaculum thermopropionicum (strain DSM 13744 / JCM 10971 / SI).